Consider the following 313-residue polypeptide: Acetyl-coenzyme A carboxylase carboxyl transferase subunit alpha (313 aa).

The CoA carboxyltransferase C-terminal domain maps to 36–286 (RLDKEVKTIY…KEYFLDTLRT (251 aa)).

This sequence belongs to the AccA family. Acetyl-CoA carboxylase is a heterohexamer composed of biotin carboxyl carrier protein (AccB), biotin carboxylase (AccC) and two subunits each of ACCase subunit alpha (AccA) and ACCase subunit beta (AccD).

It is found in the cytoplasm. It catalyses the reaction N(6)-carboxybiotinyl-L-lysyl-[protein] + acetyl-CoA = N(6)-biotinyl-L-lysyl-[protein] + malonyl-CoA. The protein operates within lipid metabolism; malonyl-CoA biosynthesis; malonyl-CoA from acetyl-CoA: step 1/1. Functionally, component of the acetyl coenzyme A carboxylase (ACC) complex. First, biotin carboxylase catalyzes the carboxylation of biotin on its carrier protein (BCCP) and then the CO(2) group is transferred by the carboxyltransferase to acetyl-CoA to form malonyl-CoA. This Helicobacter acinonychis (strain Sheeba) protein is Acetyl-coenzyme A carboxylase carboxyl transferase subunit alpha.